A 307-amino-acid polypeptide reads, in one-letter code: MNENAGRSLAPQASEGLGTPRDYISLLKPRVMSLVIFTALVGLVRAPDHVHPVIAFTAILCIAVGAGAAGALNMWWDADIDAVMSRTQRRPIPAGRVTPREALAFGLTLAAFSVVVLGLLVNVLAGALLAFTIFFYVVVYTMWLKRSTPQNIVIGGLSGALPPMVAWAAASGSISLESVILVAIIFFWTPPHFWALSLYRADDYARAGVPMLPVTAGPDETRKQILLYTLFLVPLALSPVMLGEAGLAYGVVAGVTGLGMLLLAVNVYRRRTGPAAVTAAKKLFGFSILYLFLLFATLLAEALVRGM.

A run of 8 helical transmembrane segments spans residues 24-44 (ISLLKPRVMSLVIFTALVGLV), 52-72 (PVIAFTAILCIAVGAGAAGAL), 115-135 (VVLGLLVNVLAGALLAFTIFF), 152-172 (IVIGGLSGALPPMVAWAAASG), 179-199 (VILVAIIFFWTPPHFWALSLY), 224-244 (QILLYTLFLVPLALSPVMLGE), 245-265 (AGLAYGVVAGVTGLGMLLLAV), and 284-304 (FGFSILYLFLLFATLLAEALV).

This sequence belongs to the UbiA prenyltransferase family. Protoheme IX farnesyltransferase subfamily.

The protein resides in the cell inner membrane. The enzyme catalyses heme b + (2E,6E)-farnesyl diphosphate + H2O = Fe(II)-heme o + diphosphate. Its pathway is porphyrin-containing compound metabolism; heme O biosynthesis; heme O from protoheme: step 1/1. Functionally, converts heme B (protoheme IX) to heme O by substitution of the vinyl group on carbon 2 of heme B porphyrin ring with a hydroxyethyl farnesyl side group. In Azorhizobium caulinodans (strain ATCC 43989 / DSM 5975 / JCM 20966 / LMG 6465 / NBRC 14845 / NCIMB 13405 / ORS 571), this protein is Protoheme IX farnesyltransferase.